A 211-amino-acid polypeptide reads, in one-letter code: MTSRRTRLRLIERLRKNGIQNEAVLEAMTEIPRHIFVDEALAHRAYEDTALPIGHSQTISQPYIVARMTELLCSGWKPKRVLEVGAGSGYQTAILARLSTQVYTVERIAPLLEKAKLRFKALKLNNVSAKLSDGRWGWPEQGPFDAIMVTAAPEQTPSELLEQLADGGRLVIPVGSGSEQMLKVYKRQGAEIEESSLEQVRFVPLLGGVVR.

Ser60 is an active-site residue.

The protein belongs to the methyltransferase superfamily. L-isoaspartyl/D-aspartyl protein methyltransferase family.

The protein resides in the cytoplasm. It carries out the reaction [protein]-L-isoaspartate + S-adenosyl-L-methionine = [protein]-L-isoaspartate alpha-methyl ester + S-adenosyl-L-homocysteine. Its function is as follows. Catalyzes the methyl esterification of L-isoaspartyl residues in peptides and proteins that result from spontaneous decomposition of normal L-aspartyl and L-asparaginyl residues. It plays a role in the repair and/or degradation of damaged proteins. This chain is Protein-L-isoaspartate O-methyltransferase, found in Hahella chejuensis (strain KCTC 2396).